A 396-amino-acid chain; its full sequence is Cell adhesion molecule 3 (396 aa).

The first 22 residues, 1–22, serve as a signal peptide directing secretion; it reads MGAPSALPLLLLLACSWAPGGA. The Ig-like V-type domain maps to 23–124; the sequence is NLSQDDSQPW…VRTAKSLVTV (102 aa). Over 23–328 the chain is Extracellular; the sequence is NLSQDDSQPW…PVPSSSSTYH (306 aa). 3 disulfide bridges follow: Cys-48–Cys-108, Cys-150–Cys-207, and Cys-252–Cys-297. 2 Ig-like C2-type domains span residues 128-226 and 231-313; these read PQKP…QRIE and PTAM…FTLN. Asn-288 carries N-linked (GlcNAc...) asparagine glycosylation. Residues 329–349 form a helical membrane-spanning segment; that stretch reads AIIGGIVAFIVFLLLILLIFL. The Cytoplasmic segment spans residues 350 to 396; it reads GHYLIRHKGTYLTHEAKGSDDAPDADTAIINAEGGQSGGDDKKEYFI. The segment at 365 to 396 is disordered; that stretch reads AKGSDDAPDADTAIINAEGGQSGGDDKKEYFI. Phosphoserine is present on Ser-386.

It belongs to the nectin family. In terms of assembly, homodimer. Can form trans-heterodimers with NECTIN3. Interacts with EPB41L1, DLG3, PALS2 and CASK.

The protein localises to the cell membrane. It localises to the cell junction. Involved in cell-cell adhesion. Has both calcium-independent homophilic cell-cell adhesion activity and calcium-independent heterophilic cell-cell adhesion activity with IGSF4, NECTIN1 and NECTIN3. Interaction with EPB41L1 may regulate structure or function of cell-cell junctions. The polypeptide is Cell adhesion molecule 3 (Cadm3) (Rattus norvegicus (Rat)).